The following is a 71-amino-acid chain: Mitotic-spindle organizing protein 1 (71 aa).

The protein belongs to the MOZART1 family. Part of the gamma-tubulin complex.

It is found in the cytoplasm. It localises to the cytoskeleton. The protein resides in the microtubule organizing center. Its subcellular location is the spindle pole body. In terms of biological role, required for gamma-tubulin complex recruitment to the microtubule organizing center (MTOC). The polypeptide is Mitotic-spindle organizing protein 1 (Aspergillus clavatus (strain ATCC 1007 / CBS 513.65 / DSM 816 / NCTC 3887 / NRRL 1 / QM 1276 / 107)).